The sequence spans 379 residues: Protein COS4 (379 aa).

Helical transmembrane passes span 43-63, 70-90, 233-253, and 255-275; these read IYKS…SVWW, IYPL…VLVI, ISNI…YVSR, and MCLL…VQGF.

Belongs to the DUP/COS family.

The protein localises to the membrane. This chain is Protein COS4 (COS4), found in Saccharomyces cerevisiae (strain ATCC 204508 / S288c) (Baker's yeast).